Consider the following 415-residue polypeptide: Actin-like protein 7B (415 aa).

A disordered region spans residues 1–31 (MATRNSPMPLGTAQGDPGEAGTRPGPDASLR). Residue serine 6 is modified to Phosphoserine.

Belongs to the actin family. As to expression, detected only in the testis and, to a lesser extent, in the prostate.

The protein resides in the cytoplasm. It is found in the cytoskeleton. The polypeptide is Actin-like protein 7B (ACTL7B) (Homo sapiens (Human)).